The sequence spans 133 residues: ATP synthase epsilon chain, chloroplastic (133 aa).

It belongs to the ATPase epsilon chain family. F-type ATPases have 2 components, CF(1) - the catalytic core - and CF(0) - the membrane proton channel. CF(1) has five subunits: alpha(3), beta(3), gamma(1), delta(1), epsilon(1). CF(0) has three main subunits: a, b and c.

The protein localises to the plastid. Its subcellular location is the chloroplast thylakoid membrane. Its function is as follows. Produces ATP from ADP in the presence of a proton gradient across the membrane. The chain is ATP synthase epsilon chain, chloroplastic from Gossypium barbadense (Sea Island cotton).